Here is a 91-residue protein sequence, read N- to C-terminus: Tityustoxin-19 (91 aa).

A signal peptide spans 1–25 (MVATNRCCVFALLFALLLVHSLTEA). The BetaSPN-type CS-alpha/beta domain occupies 58–91 (EYACPAIDKFCEDHCAAKKAVGKCDDFKCNCIKL). 3 disulfides stabilise this stretch: Cys-61-Cys-81, Cys-68-Cys-86, and Cys-72-Cys-88.

Belongs to the long chain scorpion toxin family. Class 2 subfamily. Expressed by the venom gland.

The protein localises to the secreted. May function as a voltage-gated potassium channel blocker and may have cytolytic activity. Is often not detected in the tested venom fractions, suggesting that the toxin is likely subject to frequent processing within the venom. In terms of biological role, specific and reversible blocker of the potassium channel Kv1.2/KCNA2 (IC(50)=544 nM). Its function is as follows. Shows cytolytic effects on erythrocytes and induces non-selective pore formation when high concentrations (300 nM) are applied on oocytes. Functionally, does not cause hemolysis, mast cell degranulation, LDH release, and does not have antimicrobial activity. Does not cause edema and pain. The polypeptide is Tityustoxin-19 (Tityus serrulatus (Brazilian scorpion)).